Reading from the N-terminus, the 369-residue chain is Transposase for insertion sequence element IS1201 (369 aa).

Belongs to the transposase mutator family.

Functionally, required for the transposition of the insertion element. The chain is Transposase for insertion sequence element IS1201 from Lactobacillus helveticus (Lactobacillus suntoryeus).